A 134-amino-acid chain; its full sequence is Arsenate reductase (134 aa).

Catalysis depends on nucleophile residues Cys-11, Cys-83, and Cys-90. 2 disulfides stabilise this stretch: Cys-11–Cys-83 and Cys-83–Cys-90.

It belongs to the low molecular weight phosphotyrosine protein phosphatase family. Thioredoxin-coupled ArsC subfamily.

It is found in the cytoplasm. It catalyses the reaction arsenate + [thioredoxin]-dithiol + H(+) = arsenite + [thioredoxin]-disulfide + H2O. In terms of biological role, catalyzes the reduction of arsenate [As(V)] to arsenite [As(III)]. This is Arsenate reductase from Bacillus cereus (strain ZK / E33L).